The sequence spans 342 residues: Isopentenyl-diphosphate delta-isomerase (342 aa).

11–12 serves as a coordination point for substrate; that stretch reads RK. Residues Ser68, 69–71, Ser99, and Asn128 each bind FMN; that span reads SMT. Substrate is bound at residue 99 to 101; sequence SQR. Residue Gln162 coordinates substrate. Position 163 (Glu163) interacts with Mg(2+). FMN-binding positions include Lys194, Ser219, Thr224, 275 to 277, and 296 to 297; these read GVR and AK.

Belongs to the IPP isomerase type 2 family. Homooctamer. Dimer of tetramers. It depends on FMN as a cofactor. NADPH serves as cofactor. Mg(2+) is required as a cofactor.

It is found in the cytoplasm. It carries out the reaction isopentenyl diphosphate = dimethylallyl diphosphate. Its function is as follows. Involved in the biosynthesis of isoprenoids. Catalyzes the 1,3-allylic rearrangement of the homoallylic substrate isopentenyl (IPP) to its allylic isomer, dimethylallyl diphosphate (DMAPP). In Legionella pneumophila (strain Paris), this protein is Isopentenyl-diphosphate delta-isomerase.